A 3726-amino-acid chain; its full sequence is Histone-lysine N-methyltransferase trithorax (3726 aa).

4 disordered regions span residues 1–247, 321–352, 371–429, and 509–624; these read MGRS…ATTS, QLNS…GVGG, NEVA…TAKQ, and AGAS…RSTR. Low complexity-rich tracts occupy residues 31–53 and 71–101; these read PAEP…GSSA and GGAS…STGS. Over residues 102-115 the composition is skewed to gly residues; the sequence is GSSGSGSTNGGSVN. Over residues 126 to 143 the composition is skewed to basic and acidic residues; the sequence is LDKEAVTKDQNGDGDKTR. Residues 147–205 are compositionally biased toward low complexity; that stretch reads SSAPSGKLSAAASGKALSKSSRTFSASTSVTSSGRSSGSSPDGNSGASSDGASSGISCG. The segment covering 206–215 has biased composition (polar residues); it reads KSTAKSTEAS. Over residues 222 to 247 the composition is skewed to low complexity; that stretch reads TTGAGTCSSAKSSKASSGTTSEATTS. 2 stretches are compositionally biased toward low complexity: residues 384–402 and 509–525; these read AAAN…GPPA and AGAS…SSSN. A compositionally biased stretch (acidic residues) spans 553-586; the sequence is PEDQNNAEDDEMDDDDDDEEAEEDDENEDDNDEA. Positions 587–610 are enriched in basic and acidic residues; the sequence is VSEKSAETEKSAGADERDPDEKQL. Positions 759–884 form a DNA-binding region, nuclear receptor; sequence PSACSICSAV…PGMRGEAAAR (126 aa). 4 disordered regions span residues 915 to 937, 981 to 1049, 1115 to 1184, and 1208 to 1231; these read TSVK…PNPL, LTKK…SHGV, VPSA…SSAK, and DIAT…KEHR. A compositionally biased stretch (polar residues) spans 918–937; sequence KWKSSGDSTSALTSIKPNPL. Residues 986 to 1000 are compositionally biased toward basic and acidic residues; the sequence is SKQEKEKVKESEQSE. A compositionally biased stretch (low complexity) spans 1031–1041; it reads PQTSTTTQPSA. Positions 1123–1132 are enriched in basic and acidic residues; the sequence is SPEKPTHIVT. Low complexity-rich tracts occupy residues 1173 to 1183 and 1211 to 1223; these read GTASAAGGSSA and TSSS…NQTQ. 3 PHD-type zinc fingers span residues 1266 to 1347, 1348 to 1393, and 1421 to 1482; these read RALC…CTVC, YTCN…CLKC, and GNFC…CARR. A Bromo domain is found at 1496–1663; sequence AVMEEFKASL…SEQFPWFQNE (168 aa). The tract at residues 1573–1592 is disordered; it reads FKDQQQQQQQRNANMNKPRV. The segment at 1734–1774 adopts a C2HC pre-PHD-type zinc-finger fold; the sequence is TRMCLFCRKSGEGLSGEEARLLYCGHDCWVHTNCAMWSAEV. The PHD-type 4 zinc-finger motif lies at 1795–1842; it reads IKCTVCGNRGATVGCNVRSCGEHYHYPCARSIDCAFLTDKSMYCPAHA. Residues 1884 to 1941 form the FYR N-terminal domain; it reads RVQFHIGSLEVRQLGAIVPRFSDSYEAVVPINFLCSRLYWSSKEPWKIVEYTVRTTIQ. Disordered stretches follow at residues 1991–2019, 2068–2110, 2283–2302, 2649–2669, 2866–2894, 3029–3096, and 3347–3381; these read GGTD…PQQQ, TQAM…WPAS, CSPT…QGMT, GGGA…LGGT, SNLK…IASK, QHFS…PTPP, and RKEE…IQEP. Positions 2074-2087 are enriched in low complexity; sequence NQAQNQNQQAGGAN. The segment covering 3032–3043 has biased composition (low complexity); sequence STSSSSSSSNCS. A compositionally biased stretch (polar residues) spans 3044-3057; sequence LPTNVVNPMQQQAP. An FYR C-terminal domain is found at 3386–3470; it reads GPHLLYEIQS…EKCSKYTPKY (85 aa). Residues 3588–3704 enclose the SET domain; that stretch reads DYVGVFRSHI…QGEELTYDYK (117 aa). Residues histidine 3598 and arginine 3600 each coordinate S-adenosyl-L-methionine. An S-methylcysteine; by autocatalysis modification is found at cysteine 3641. S-adenosyl-L-methionine is bound by residues tyrosine 3642 and 3665 to 3666; that span reads NH. Zn(2+) contacts are provided by cysteine 3668, cysteine 3714, cysteine 3716, and cysteine 3721. Positions 3710–3726 constitute a Post-SET domain; the sequence is EKIPCSCGSKRCRKYLN.

It belongs to the class V-like SAM-binding methyltransferase superfamily. Histone-lysine methyltransferase family. TRX/MLL subfamily. In terms of assembly, interacts (via SET domain) with ash1 (via SET domain). Interacts with Nup98. Maternal isoforms are expressed in syncytial blastoderm, confined to the ventral region fated to become mesoderm. An additional broad domain of expression arises during cellularization and is quickly resolved into four pair-rule-like stripes in the posterior half of the embryo.

It is found in the nucleus. It localises to the chromosome. It carries out the reaction L-lysyl(9)-[histone H3] + 3 S-adenosyl-L-methionine = N(6),N(6),N(6)-trimethyl-L-lysyl(9)-[histone H3] + 3 S-adenosyl-L-homocysteine + 3 H(+). The catalysed reaction is L-cysteinyl-[protein] + S-adenosyl-L-methionine = S-methyl-L-cysteinyl-[protein] + S-adenosyl-L-homocysteine + H(+). Functionally, histone methyltransferase that methylates 'Lys-4' of histone H3 (H3K4me). H3K4me represents a specific tag for epigenetic transcriptional activation. Functions in segment determination through interaction with genes of bithorax (BX-C) and antennapedia (ANT-C) complexes. Acts as an activator of BX-C. Involved in the very early regulation of homeotic genes expressed only in the posterior region of the embryo. Also has auto-methylation activity on Cys-3641. This chain is Histone-lysine N-methyltransferase trithorax, found in Drosophila melanogaster (Fruit fly).